The following is a 962-amino-acid chain: Glycine dehydrogenase (decarboxylating) (962 aa).

Lysine 709 carries the post-translational modification N6-(pyridoxal phosphate)lysine.

This sequence belongs to the GcvP family. The glycine cleavage system is composed of four proteins: P, T, L and H. The cofactor is pyridoxal 5'-phosphate.

The catalysed reaction is N(6)-[(R)-lipoyl]-L-lysyl-[glycine-cleavage complex H protein] + glycine + H(+) = N(6)-[(R)-S(8)-aminomethyldihydrolipoyl]-L-lysyl-[glycine-cleavage complex H protein] + CO2. In terms of biological role, the glycine cleavage system catalyzes the degradation of glycine. The P protein binds the alpha-amino group of glycine through its pyridoxal phosphate cofactor; CO(2) is released and the remaining methylamine moiety is then transferred to the lipoamide cofactor of the H protein. The polypeptide is Glycine dehydrogenase (decarboxylating) (Shewanella baltica (strain OS195)).